The chain runs to 237 residues: Ribosomal RNA small subunit methyltransferase G (237 aa).

Residues Gly-76, Phe-81, 99–101 (DSS), 128–129 (IE), and Arg-147 each bind S-adenosyl-L-methionine.

This sequence belongs to the methyltransferase superfamily. RNA methyltransferase RsmG family.

The protein localises to the cytoplasm. Specifically methylates the N7 position of a guanine in 16S rRNA. In Prochlorococcus marinus (strain MIT 9312), this protein is Ribosomal RNA small subunit methyltransferase G.